The sequence spans 279 residues: Pantothenate synthetase (279 aa).

26–33 is an ATP binding site; that stretch reads MGNLHDGH. His33 (proton donor) is an active-site residue. Gln57 is a binding site for (R)-pantoate. Residue Gln57 participates in beta-alanine binding. 144 to 147 serves as a coordination point for ATP; that stretch reads GKKD. Gln150 contributes to the (R)-pantoate binding site. Position 181–184 (181–184) interacts with ATP; it reads LSSR.

Belongs to the pantothenate synthetase family. Homodimer.

It localises to the cytoplasm. It carries out the reaction (R)-pantoate + beta-alanine + ATP = (R)-pantothenate + AMP + diphosphate + H(+). It participates in cofactor biosynthesis; (R)-pantothenate biosynthesis; (R)-pantothenate from (R)-pantoate and beta-alanine: step 1/1. Catalyzes the condensation of pantoate with beta-alanine in an ATP-dependent reaction via a pantoyl-adenylate intermediate. In Janthinobacterium sp. (strain Marseille) (Minibacterium massiliensis), this protein is Pantothenate synthetase.